Consider the following 448-residue polypeptide: Probable glycine dehydrogenase (decarboxylating) subunit 1 (448 aa).

The protein belongs to the GcvP family. N-terminal subunit subfamily. As to quaternary structure, the glycine cleavage system is composed of four proteins: P, T, L and H. In this organism, the P 'protein' is a heterodimer of two subunits.

It carries out the reaction N(6)-[(R)-lipoyl]-L-lysyl-[glycine-cleavage complex H protein] + glycine + H(+) = N(6)-[(R)-S(8)-aminomethyldihydrolipoyl]-L-lysyl-[glycine-cleavage complex H protein] + CO2. In terms of biological role, the glycine cleavage system catalyzes the degradation of glycine. The P protein binds the alpha-amino group of glycine through its pyridoxal phosphate cofactor; CO(2) is released and the remaining methylamine moiety is then transferred to the lipoamide cofactor of the H protein. In Staphylococcus epidermidis (strain ATCC 35984 / DSM 28319 / BCRC 17069 / CCUG 31568 / BM 3577 / RP62A), this protein is Probable glycine dehydrogenase (decarboxylating) subunit 1.